The following is a 178-amino-acid chain: Large ribosomal subunit protein eL20x (178 aa).

This sequence belongs to the eukaryotic ribosomal protein eL20 family.

The chain is Large ribosomal subunit protein eL20x (RPL18AC) from Arabidopsis thaliana (Mouse-ear cress).